The chain runs to 476 residues: Eukaryotic translation initiation factor 3 subunit L (476 aa).

One can recognise a PCI domain in the interval 257–452 (DAIRMFSHIL…DLDYALEKDL (196 aa)).

It belongs to the eIF-3 subunit L family. In terms of assembly, component of the eukaryotic translation initiation factor 3 (eIF-3) complex.

It localises to the cytoplasm. In terms of biological role, component of the eukaryotic translation initiation factor 3 (eIF-3) complex, which is involved in protein synthesis of a specialized repertoire of mRNAs and, together with other initiation factors, stimulates binding of mRNA and methionyl-tRNAi to the 40S ribosome. The eIF-3 complex specifically targets and initiates translation of a subset of mRNAs involved in cell proliferation. This is Eukaryotic translation initiation factor 3 subunit L from Emericella nidulans (strain FGSC A4 / ATCC 38163 / CBS 112.46 / NRRL 194 / M139) (Aspergillus nidulans).